A 148-amino-acid polypeptide reads, in one-letter code: Auxin-responsive protein SAUR65 (148 aa).

The protein belongs to the ARG7 family.

It localises to the cell membrane. In terms of biological role, may promote auxin-stimulated organ elongation, such as hypocotyls, stamen filaments and petals. This is Auxin-responsive protein SAUR65 from Arabidopsis thaliana (Mouse-ear cress).